The chain runs to 129 residues: Mite allergen Blo t 21 (129 aa).

An N-terminal signal peptide occupies residues 1 to 16 (MKFIIALAALIAVACA).

It belongs to the mite group 5 allergen family. In terms of assembly, may exist as homodimer and homotrimer. As to expression, midgut and hindgut contents as well as fecal pellets (at protein level).

The chain is Mite allergen Blo t 21 from Blomia tropicalis (Mite).